Here is a 298-residue protein sequence, read N- to C-terminus: 4-hydroxy-tetrahydrodipicolinate synthase (298 aa).

Position 51 (Thr-51) interacts with pyruvate. Residue Tyr-139 is the Proton donor/acceptor of the active site. The active-site Schiff-base intermediate with substrate is the Lys-167. Residue Ile-209 participates in pyruvate binding.

This sequence belongs to the DapA family. Homotetramer; dimer of dimers.

It localises to the cytoplasm. It catalyses the reaction L-aspartate 4-semialdehyde + pyruvate = (2S,4S)-4-hydroxy-2,3,4,5-tetrahydrodipicolinate + H2O + H(+). It participates in amino-acid biosynthesis; L-lysine biosynthesis via DAP pathway; (S)-tetrahydrodipicolinate from L-aspartate: step 3/4. In terms of biological role, catalyzes the condensation of (S)-aspartate-beta-semialdehyde [(S)-ASA] and pyruvate to 4-hydroxy-tetrahydrodipicolinate (HTPA). In Haemophilus influenzae (strain ATCC 51907 / DSM 11121 / KW20 / Rd), this protein is 4-hydroxy-tetrahydrodipicolinate synthase.